A 633-amino-acid chain; its full sequence is uncharacterized protein (633 aa).

The interval 1–188 (MNNRGGFSHP…GQSSFYNSSY (188 aa)) is disordered. Low complexity-rich tracts occupy residues 32-80 (GQPQ…GGNN) and 104-148 (NNGN…TNSR). A compositionally biased stretch (gly residues) spans 152–178 (RGGSSRGGSSRGGNSGSSRGGSRGGYR). A coiled-coil region spans residues 580-607 (KSKNWTVDQASDELKKLSKNLRLLVSKH). Residues 611-633 (TKFQPPSADHTTQFEQDDEEEEN) are disordered.

This is an uncharacterized protein from Dictyostelium discoideum (Social amoeba).